Consider the following 202-residue polypeptide: Small ribosomal subunit protein uS4c (202 aa).

One can recognise an S4 RNA-binding domain in the interval 90 to 154; sequence MRLDNIIFRL…SQSIIIKNLN (65 aa).

It belongs to the universal ribosomal protein uS4 family. In terms of assembly, part of the 30S ribosomal subunit. Contacts protein S5. The interaction surface between S4 and S5 is involved in control of translational fidelity.

The protein resides in the plastid. It is found in the chloroplast. Functionally, one of the primary rRNA binding proteins, it binds directly to 16S rRNA where it nucleates assembly of the body of the 30S subunit. Its function is as follows. With S5 and S12 plays an important role in translational accuracy. The polypeptide is Small ribosomal subunit protein uS4c (rps4) (Marchantia polymorpha (Common liverwort)).